Reading from the N-terminus, the 187-residue chain is Photosystem I assembly protein Ycf4 (187 aa).

The next 2 helical transmembrane spans lie at 23-43 (INYF…IVGI) and 70-90 (FYGI…ILGV).

The protein belongs to the Ycf4 family.

Its subcellular location is the plastid. The protein resides in the chloroplast thylakoid membrane. Seems to be required for the assembly of the photosystem I complex. The sequence is that of Photosystem I assembly protein Ycf4 from Chara vulgaris (Common stonewort).